The chain runs to 531 residues: SWI/SNF-related matrix-associated actin-dependent regulator of chromatin subfamily D member 2 (531 aa).

2 positions are modified to asymmetric dimethylarginine: R81 and R104. S203 is modified (phosphoserine). Positions 205–227 (SKAEGDTAGTTGTPGGTPAGDKV) are disordered. The residue at position 217 (T217) is a Phosphothreonine. K226 participates in a covalent cross-link: Glycyl lysine isopeptide (Lys-Gly) (interchain with G-Cter in SUMO2). In terms of domain architecture, SWIB/MDM2 spans 306 to 383 (HQPPQYKLDP…PMKLAGLLQH (78 aa)).

This sequence belongs to the SMARCD family. Component of the multiprotein chromatin-remodeling complexes SWI/SNF: SWI/SNF-A (BAF), SWI/SNF-B (PBAF) and related complexes. The canonical complex contains a catalytic subunit (either SMARCA4/BRG1/BAF190A or SMARCA2/BRM/BAF190B), and at least SMARCE1, ACTL6A/BAF53, SMARCC1/BAF155, SMARCC2/BAF170, and SMARCB1/SNF5/BAF47. Other subunits specific to each of the complexes may also be present permitting several possible combinations developmentally and tissue specific. Component of the BAF complex, which includes at least actin (ACTB), ARID1A/BAF250A, ARID1B/BAF250B, SMARCA2/BRM, SMARCA4/BRG1, ACTL6A/BAF53, ACTL6B/BAF53B, SMARCE1/BAF57, SMARCC1/BAF155, SMARCC2/BAF170, SMARCB1/SNF5/INI1, and one or more SMARCD1/BAF60A, SMARCD2/BAF60B, or SMARCD3/BAF60C. In muscle cells, the BAF complex also contains DPF3. Component of the SWI/SNF-B (PBAF) chromatin remodeling complex, at least composed of SMARCA4/BRG1, SMARCB1/BAF47/SNF5, ACTL6A/BAF53A or ACTL6B/BAF53B, SMARCE1/BAF57, SMARCD1/BAF60A, SMARCD2/BAF60B, perhaps SMARCD3/BAF60C, SMARCC1/BAF155, SMARCC2/BAF170, PBRM1/BAF180, ARID2/BAF200 and actin (ACTB). Interacts with UNKL. Interacts with CEBPE. Ubiquitinated through a signaling process involving RAC1 and the RING finger protein UNKL.

It is found in the nucleus. In terms of biological role, involved in transcriptional activation and repression of select genes by chromatin remodeling (alteration of DNA-nucleosome topology). Component of SWI/SNF chromatin remodeling complexes that carry out key enzymatic activities, changing chromatin structure by altering DNA-histone contacts within a nucleosome in an ATP-dependent manner. Critical regulator of myeloid differentiation, controlling granulocytopoiesis and the expression of genes involved in neutrophil granule formation. This chain is SWI/SNF-related matrix-associated actin-dependent regulator of chromatin subfamily D member 2 (SMARCD2), found in Bos taurus (Bovine).